Here is a 236-residue protein sequence, read N- to C-terminus: MSAPDLKRAAAERAIPLVEDGMRLGIGTGSTAAAFIKLLGERVRAGLKVTGVPTSEATRIACEREGIPLATLEDLPELDLTIDGADEVDGSLRLIKGGGAALLREKIVAVASRRMVVIADASKHVETLGAFPLPVEVNLFGIGATTRAVEAAVARAGCTGEIVRRHEASGAPLLTDGGHAILDLRLGRIPDPEALSAGLWAVPGVVEHGLFLGIADAAILAAAEGDTAVVSVLGRL.

Residues 28 to 31 (TGST), 83 to 86 (DGAD), and 96 to 99 (KGGG) each bind substrate. Glu-105 acts as the Proton acceptor in catalysis. Position 123 (Lys-123) interacts with substrate.

Belongs to the ribose 5-phosphate isomerase family. In terms of assembly, homodimer.

The catalysed reaction is aldehydo-D-ribose 5-phosphate = D-ribulose 5-phosphate. The protein operates within carbohydrate degradation; pentose phosphate pathway; D-ribose 5-phosphate from D-ribulose 5-phosphate (non-oxidative stage): step 1/1. Its function is as follows. Catalyzes the reversible conversion of ribose-5-phosphate to ribulose 5-phosphate. This chain is Ribose-5-phosphate isomerase A, found in Methylorubrum extorquens (strain CM4 / NCIMB 13688) (Methylobacterium extorquens).